The primary structure comprises 393 residues: Elongation factor Tu (393 aa).

The region spanning 10–203 (KPHVNIGTIG…AVDSYIPQPV (194 aa)) is the tr-type G domain. The tract at residues 19–26 (GHVDHGKT) is G1. 19-26 (GHVDHGKT) is a GTP binding site. Position 26 (T26) interacts with Mg(2+). Residues 60–64 (GITIS) form a G2 region. Positions 81 to 84 (DCPG) are G3. Residues 81–85 (DCPGH) and 136–139 (NKVD) each bind GTP. The segment at 136-139 (NKVD) is G4. Residues 173 to 175 (SAL) are G5.

It belongs to the TRAFAC class translation factor GTPase superfamily. Classic translation factor GTPase family. EF-Tu/EF-1A subfamily. In terms of assembly, monomer.

It localises to the cytoplasm. The enzyme catalyses GTP + H2O = GDP + phosphate + H(+). In terms of biological role, GTP hydrolase that promotes the GTP-dependent binding of aminoacyl-tRNA to the A-site of ribosomes during protein biosynthesis. This Chlorobaculum tepidum (strain ATCC 49652 / DSM 12025 / NBRC 103806 / TLS) (Chlorobium tepidum) protein is Elongation factor Tu.